Consider the following 155-residue polypeptide: Interleukin-2 (155 aa).

The N-terminal stretch at 1 to 20 is a signal peptide; the sequence is MYKMQLVACIALSLVLITNS. O-linked (GalNAc...) threonine glycosylation is present at T23. C77 and C125 are disulfide-bonded.

This sequence belongs to the IL-2 family.

The protein localises to the secreted. Its function is as follows. Cytokine produced by activated CD4-positive helper T-cells and to a lesser extend activated CD8-positive T-cells and natural killer (NK) cells that plays pivotal roles in the immune response and tolerance. Binds to a receptor complex composed of either the high-affinity trimeric IL-2R (IL2RA/CD25, IL2RB/CD122 and IL2RG/CD132) or the low-affinity dimeric IL-2R (IL2RB and IL2RG). Interaction with the receptor leads to oligomerization and conformation changes in the IL-2R subunits resulting in downstream signaling starting with phosphorylation of JAK1 and JAK3. In turn, JAK1 and JAK3 phosphorylate the receptor to form a docking site leading to the phosphorylation of several substrates including STAT5. This process leads to activation of several pathways including STAT, phosphoinositide-3-kinase/PI3K and mitogen-activated protein kinase/MAPK pathways. Functions as a T-cell growth factor and can increase NK-cell cytolytic activity as well. Promotes strong proliferation of activated B-cells and subsequently immunoglobulin production. Plays a pivotal role in regulating the adaptive immune system by controlling the survival and proliferation of regulatory T-cells, which are required for the maintenance of immune tolerance. Moreover, participates in the differentiation and homeostasis of effector T-cell subsets, including Th1, Th2, Th17 as well as memory CD8-positive T-cells. This is Interleukin-2 (IL2) from Dasypus novemcinctus (Nine-banded armadillo).